The primary structure comprises 625 residues: tRNA uridine 5-carboxymethylaminomethyl modification enzyme MnmG (625 aa).

FAD is bound by residues 11–16 (GAGHAG), valine 123, and serine 178. 271–285 (GPRYCPSIETKIVTF) serves as a coordination point for NAD(+). Residue glutamine 368 participates in FAD binding.

This sequence belongs to the MnmG family. In terms of assembly, homodimer. Heterotetramer of two MnmE and two MnmG subunits. FAD is required as a cofactor.

Its subcellular location is the cytoplasm. In terms of biological role, NAD-binding protein involved in the addition of a carboxymethylaminomethyl (cmnm) group at the wobble position (U34) of certain tRNAs, forming tRNA-cmnm(5)s(2)U34. The protein is tRNA uridine 5-carboxymethylaminomethyl modification enzyme MnmG of Bacteroides fragilis (strain ATCC 25285 / DSM 2151 / CCUG 4856 / JCM 11019 / LMG 10263 / NCTC 9343 / Onslow / VPI 2553 / EN-2).